Here is a 223-residue protein sequence, read N- to C-terminus: Ubiquinone biosynthesis protein COQ4 homolog 2, mitochondrial (223 aa).

A mitochondrion-targeting transit peptide spans 1 to 26 (MFLRRVHPVRLGHAIQRSLTTTKSRN). Low complexity predominate over residues 21-32 (TTKSRNESTTTT). A disordered region spans residues 21-43 (TTKSRNESTTTTVEAPQAVPSPP). 4 residues coordinate Zn(2+): His177, Asp178, His181, and Glu193.

It belongs to the COQ4 family. In terms of assembly, component of a multi-subunit COQ enzyme complex. Zn(2+) serves as cofactor.

It localises to the mitochondrion inner membrane. It carries out the reaction a 4-hydroxy-3-methoxy-5-(all-trans-polyprenyl)benzoate + H(+) = a 2-methoxy-6-(all-trans-polyprenyl)phenol + CO2. It participates in cofactor biosynthesis; ubiquinone biosynthesis. Functionally, lyase that catalyzes the C1-decarboxylation of 4-hydroxy-3-methoxy-5-(all-trans-polyprenyl)benzoic acid into 2-methoxy-6-(all-trans-polyprenyl)phenol during ubiquinone biosynthesis. The sequence is that of Ubiquinone biosynthesis protein COQ4 homolog 2, mitochondrial from Culex quinquefasciatus (Southern house mosquito).